Reading from the N-terminus, the 268-residue chain is MAGELRIMENKSREDINLSPVSKIEIYSFFDPFSSDCFKLSAILSKLRIEYNQYIRIRHILNPSLKVLTKCQAQSTSNFDNIALAYKAAELQGRLRAERFIHLMQNEIIPKRDIITKSMICDCIQNAGIDLEVFKDDLQKSKLTESLKIDLHIAREMEIEQAPSLVFFSEDVHEEGLKVEGLYPYHIYTYIINELMGKPIEKNLPPKLETYIQQQQLVTMEELLTIYEWPEKLLNKELKKLAIQQKIEKLKYPDGDFWKSKMPKIKSK.

Belongs to the SpxH family. As to quaternary structure, interacts with Spx.

The protein resides in the cytoplasm. Adapter protein required for efficient degradation of Spx by ClpXP under non-stress conditions. Interaction with Spx stabilizes Spx and exposes the C-terminus of Spx for recognition and proteolysis by ClpXP. This is ClpXP adapter protein SpxH from Staphylococcus aureus (strain MRSA252).